We begin with the raw amino-acid sequence, 418 residues long: Pigment epithelium-derived factor (418 aa).

A signal peptide spans 1-19 (MQALVLLLCIGALLGHSSC). At glutamine 20 the chain carries Pyrrolidone carboxylic acid. The segment at 20–39 (QNPASPPEEGSPDPDSTGAL) is disordered. Residues serine 24 and serine 114 each carry the phosphoserine; by CK2 modification. A Phosphoserine; by PKA modification is found at serine 227. The N-linked (GlcNAc...) (complex) asparagine glycan is linked to asparagine 285. The O-glycosylated at one site stretch occupies residues 371-383 (TTPSPGLQPAHLT).

Belongs to the serpin family. In terms of assembly, interacts with PNPLA2; this interaction stimulates the phospholipase A2 activity of PNPLA2. In terms of processing, the N-terminus is blocked. Extracellular phosphorylation enhances antiangiogenic activity. Post-translationally, N- and O-glycosylated. O-glycosylated with a core 1 or possibly core 8 glycan. Retinal pigment epithelial cells and blood plasma.

Its subcellular location is the secreted. The protein resides in the melanosome. In terms of biological role, neurotrophic protein; induces extensive neuronal differentiation in retinoblastoma cells. Potent inhibitor of angiogenesis. As it does not undergo the S (stressed) to R (relaxed) conformational transition characteristic of active serpins, it exhibits no serine protease inhibitory activity. The protein is Pigment epithelium-derived factor (SERPINF1) of Homo sapiens (Human).